The primary structure comprises 37 residues: Large ribosomal subunit protein bL36 (37 aa).

This sequence belongs to the bacterial ribosomal protein bL36 family.

The polypeptide is Large ribosomal subunit protein bL36 (Salinispora tropica (strain ATCC BAA-916 / DSM 44818 / JCM 13857 / NBRC 105044 / CNB-440)).